The chain runs to 185 residues: Peptidyl-tRNA hydrolase (185 aa).

Tyr-14 contacts tRNA. His-19 functions as the Proton acceptor in the catalytic mechanism. TRNA contacts are provided by Phe-64, Asn-66, and Asn-112.

It belongs to the PTH family. Monomer.

The protein localises to the cytoplasm. The enzyme catalyses an N-acyl-L-alpha-aminoacyl-tRNA + H2O = an N-acyl-L-amino acid + a tRNA + H(+). Its function is as follows. Hydrolyzes ribosome-free peptidyl-tRNAs (with 1 or more amino acids incorporated), which drop off the ribosome during protein synthesis, or as a result of ribosome stalling. Catalyzes the release of premature peptidyl moieties from peptidyl-tRNA molecules trapped in stalled 50S ribosomal subunits, and thus maintains levels of free tRNAs and 50S ribosomes. This is Peptidyl-tRNA hydrolase from Lactobacillus johnsonii (strain CNCM I-12250 / La1 / NCC 533).